The chain runs to 104 residues: Large ribosomal subunit protein uL24 (104 aa).

It belongs to the universal ribosomal protein uL24 family. As to quaternary structure, part of the 50S ribosomal subunit.

One of two assembly initiator proteins, it binds directly to the 5'-end of the 23S rRNA, where it nucleates assembly of the 50S subunit. Its function is as follows. One of the proteins that surrounds the polypeptide exit tunnel on the outside of the subunit. In Shewanella baltica (strain OS223), this protein is Large ribosomal subunit protein uL24.